Consider the following 185-residue polypeptide: Elongation factor P (185 aa).

It belongs to the elongation factor P family.

It is found in the cytoplasm. It functions in the pathway protein biosynthesis; polypeptide chain elongation. In terms of biological role, involved in peptide bond synthesis. Stimulates efficient translation and peptide-bond synthesis on native or reconstituted 70S ribosomes in vitro. Probably functions indirectly by altering the affinity of the ribosome for aminoacyl-tRNA, thus increasing their reactivity as acceptors for peptidyl transferase. The sequence is that of Elongation factor P from Mesomycoplasma hyopneumoniae (strain J / ATCC 25934 / NCTC 10110) (Mycoplasma hyopneumoniae).